A 315-amino-acid chain; its full sequence is Methionyl-tRNA formyltransferase (315 aa).

113 to 116 is a (6S)-5,6,7,8-tetrahydrofolate binding site; sequence SLLP.

It belongs to the Fmt family.

The catalysed reaction is L-methionyl-tRNA(fMet) + (6R)-10-formyltetrahydrofolate = N-formyl-L-methionyl-tRNA(fMet) + (6S)-5,6,7,8-tetrahydrofolate + H(+). In terms of biological role, attaches a formyl group to the free amino group of methionyl-tRNA(fMet). The formyl group appears to play a dual role in the initiator identity of N-formylmethionyl-tRNA by promoting its recognition by IF2 and preventing the misappropriation of this tRNA by the elongation apparatus. The sequence is that of Methionyl-tRNA formyltransferase from Pectobacterium carotovorum subsp. carotovorum (strain PC1).